The chain runs to 504 residues: Immunoglobulin-binding protein EibC (504 aa).

A signal peptide spans 1–26 (MSKKFTMTLLSSSLAGLLVMSGGVSA). Residues 27–413 (QEEKYTVPYA…IAANTRTLQQ (387 aa)) are surface exposed passenger domain. The Extracellular portion of the chain corresponds to 27-453 (QEEKYTVPYA…GLFQPYSVGK (427 aa)). Residues 154 to 280 (DAKASGEFSV…TGTESDKTYG (127 aa)) form a head domain region. The tract at residues 281-296 (TRVLGGLSDGTRNSDA) is neck. Positions 297–342 (ATVGQLNRKVGGVYDDVKARITVESEKQKKYTDQKTSEVNEKVEAR) are right-handed coiled-coil (RHcc). The segment at 343-368 (TTVGVDSDGKLTRAEGATKTIAVNDG) is saddle domain. The interval 369–434 (LVALSGRTDR…INENHKEMKR (66 aa)) is left-handed coiled-coil (LHcc). Residues 411–438 (LQQHSARLDSQQRQINENHKEMKRAAAQ) are a coiled coil. Residues 411-453 (LQQHSARLDSQQRQINENHKEMKRAAAQSAALTGLFQPYSVGK) are outer membrane translocation of the passenger domain. Transmembrane regions (beta stranded) follow at residues 454–464 (FNATAAVGGYS), 467–478 (QALAVGVGYRFN), 481–490 (TAAKAGVAFS), and 494–504 (ASWNVGVNFEF). Residues 454–504 (FNATAAVGGYSDQQALAVGVGYRFNEQTAAKAGVAFSDGDASWNVGVNFEF) are translocator domain.

This sequence belongs to the autotransporter-2 (AT-2) (TC 1.B.40) family. Eib subfamily. Homotrimer; can probably form mixed heterotrimers in vivo. Will form mixed heterotrimers with EibD; these are correctly located in the outer membrane and bind IgG Fc, although less well than homotrimers. In denaturing gels runs as a band of about 200 kDa. Binds the Fc portion of immunoglobulins; binds more than 1 Fc per subunit.

It is found in the cell surface. The protein resides in the cell outer membrane. Binds (in a non-immune fashion) to the Fc portion of human IgG and less well to IgA; binding occurs on the cell surface. Confers the ability to survive exposure to human serum exposure. Binds to the Fc portion of human IgG and IgA and to whole mouse antibodies also via Fc. The chain is Immunoglobulin-binding protein EibC from Escherichia coli.